Consider the following 609-residue polypeptide: UvrABC system protein C (609 aa).

One can recognise a GIY-YIG domain in the interval 16 to 94 (HLPGVYRHLD…IKSLRPRYNI (79 aa)). The UVR domain occupies 203-238 (REVMDEIEARMLQASTELRFEEAAVLRDQMGSLSKV).

The protein belongs to the UvrC family. As to quaternary structure, interacts with UvrB in an incision complex.

It is found in the cytoplasm. Functionally, the UvrABC repair system catalyzes the recognition and processing of DNA lesions. UvrC both incises the 5' and 3' sides of the lesion. The N-terminal half is responsible for the 3' incision and the C-terminal half is responsible for the 5' incision. This chain is UvrABC system protein C, found in Bordetella pertussis (strain Tohama I / ATCC BAA-589 / NCTC 13251).